Consider the following 165-residue polypeptide: Short form salivary protein D7R1 (165 aa).

Positions 1 to 21 are cleaved as a signal peptide; it reads MFNKLHLVSLLACGLFVIAQA. 3 disulfide bridges follow: cysteine 27–cysteine 59, cysteine 40–cysteine 164, and cysteine 98–cysteine 117. Residues glutamate 28, histidine 56, tyrosine 115, aspartate 132, and glutamate 135 each contribute to the serotonin site. Residues tyrosine 115, aspartate 132, and glutamate 135 each contribute to the histamine site.

This sequence belongs to the PBP/GOBP family. Female salivary gland. Not detected in female carcass without salivary glands. Not detected in male tissues.

The protein localises to the secreted. In terms of biological role, modulates blood feeding of female mosquitoes on vertebrate species by binding and sequestering different mediators involved in the host response. Binds serotonin and histamine. Increases blood clotting time. This is Short form salivary protein D7R1 from Anopheles gambiae (African malaria mosquito).